Consider the following 281-residue polypeptide: Merozoite surface protein 2 (281 aa).

Positions 1–20 (MKVIKTLSIINFFIFVTFNI) are cleaved as a signal peptide. N-linked (GlcNAc...) asparagine glycans are attached at residues Asn-22 and Asn-36. A disordered region spans residues 42–242 (SMEESNPPTG…DSQKECTDGN (201 aa)). Positions 44–207 (EESNPPTGAS…EQTESPELQS (164 aa)) are polymorphic region. 3 consecutive repeat copies span residues 51 to 58 (GASGRAGA), 59 to 66 (GASGRAGA), and 67 to 74 (GASGRAGA). The segment at 51–74 (GASGRAGAGASGRAGAGASGRAGA) is 3 X 8 AA tandem repeats of G-A-S-G-R-A-G-A. The segment covering 54 to 76 (GRAGAGASGRAGAGASGRAGAGA) has biased composition (gly residues). Residues 77 to 133 (GAVASAGSGDGAVASAGNGANPGADAKRSTSTPATTTTTTTTNDAEASTSTSSENPN) are compositionally biased toward low complexity. Polar residues-rich tracts occupy residues 150-174 (NKAN…NVPP) and 181-209 (KSPT…QSAP). Asn-158 carries an N-linked (GlcNAc...) asparagine glycan. The N-linked (GlcNAc...) asparagine glycan is linked to Asn-230. Cys-238 and Cys-246 form a disulfide bridge. N-linked (GlcNAc...) asparagine glycans are attached at residues Asn-254 and Asn-255. Residue Asn-255 is the site of GPI-anchor amidated asparagine attachment. Positions 256-281 (SSNIASINKFVVLISATLVLSFAIFI) are cleaved as a propeptide — removed in mature form.

Its subcellular location is the cell membrane. In terms of biological role, may play a role in the merozoite attachment to the erythrocyte. The sequence is that of Merozoite surface protein 2 from Plasmodium falciparum (isolate thtn / Thailand).